A 437-amino-acid chain; its full sequence is MNYTTQMDAAKKGIVTKEMEIVAKKENMDVKDLMELISKGKVAIPANKNHKSLDPEGIGQGLRTKINVNLGISKDCYNIDMELEKVQKAIDMKAEAIMDLSCFGKTEEFRKRLIDMSPAIIGTVPIYDAVGFYDKELKDITSEEFLKVAEKHAENGADFLTIHVGMNRKTAATFKKNPRRMNIVSRGGSLLYAWMELNNKENPFYERFDELLDICEKYDVTLSLGDACRPGCIEDSTDASQIEELIALGELTKRAWERNVQVIIEGPGHMTLDEIETNMKIEKKLCHGAPFYVLGPIVTDIAPGYDHITSAIGGAIAATHGADFLCYVTPAEHLRLPNLDDMKEGIIASKIAAHAADLAKGVKGARDLDNAMAKARRDLDWERMFELSIDEEKARRYREESKAKSKDSCTMCGKMCAVRNMNRVTEGKDLNMLRDDD.

Substrate-binding positions include Asn69, Met98, Tyr127, His163, 185 to 187 (SRG), 226 to 229 (DACR), and Glu265. Residue His269 coordinates Zn(2+). Substrate is bound at residue Tyr292. His333 serves as a coordination point for Zn(2+). [4Fe-4S] cluster contacts are provided by Cys409, Cys412, and Cys416.

This sequence belongs to the ThiC family. Requires [4Fe-4S] cluster as cofactor.

The catalysed reaction is 5-amino-1-(5-phospho-beta-D-ribosyl)imidazole + S-adenosyl-L-methionine = 4-amino-2-methyl-5-(phosphooxymethyl)pyrimidine + CO + 5'-deoxyadenosine + formate + L-methionine + 3 H(+). Its pathway is cofactor biosynthesis; thiamine diphosphate biosynthesis. Functionally, catalyzes the synthesis of the hydroxymethylpyrimidine phosphate (HMP-P) moiety of thiamine from aminoimidazole ribotide (AIR) in a radical S-adenosyl-L-methionine (SAM)-dependent reaction. The sequence is that of Phosphomethylpyrimidine synthase from Clostridium botulinum (strain 657 / Type Ba4).